The sequence spans 208 residues: Uracil phosphoribosyltransferase (208 aa).

5-phospho-alpha-D-ribose 1-diphosphate is bound by residues R78, R103, and 130-138 (DPMLATGGS). Residues I193 and 198–200 (GDA) contribute to the uracil site. D199 contacts 5-phospho-alpha-D-ribose 1-diphosphate.

Belongs to the UPRTase family. Mg(2+) is required as a cofactor.

It carries out the reaction UMP + diphosphate = 5-phospho-alpha-D-ribose 1-diphosphate + uracil. Its pathway is pyrimidine metabolism; UMP biosynthesis via salvage pathway; UMP from uracil: step 1/1. Allosterically activated by GTP. In terms of biological role, catalyzes the conversion of uracil and 5-phospho-alpha-D-ribose 1-diphosphate (PRPP) to UMP and diphosphate. In Roseiflexus sp. (strain RS-1), this protein is Uracil phosphoribosyltransferase.